The primary structure comprises 833 residues: MTFYNHKEIEPKWQAFWADNHTFKTGTDASKPKFYALDMFPYPSGAGLHVGHPEGYTATDILSRFKRAQGHNVLHPMGWDAFGLPAEQYAMDTGNDPAEFTAENIANFKRQINALGFSYDWDREVNTTDPNYYKWTQWIFTKLYEKGLAYEAEVPVNWVEELGTAIANEEVLPDGTSERGGYPVVRKPMRQWMLKITAYAERLLEDLEEVDWPESIKDMQRNWIGKSTGANVTFKVKDTDKDFTVFTTRPDTLFGATYAVLAPEHALVDAITTADQAEAVAEYKRQASLKSDLARTDLAKEKTGVWTGAYAINPVNGKEIPVWIADYVLASYGTGAIMAVPAHDERDWEFAKQFNLDIIPVLEGGNVEEAAFTEDGLHINSDFLDGLDKAAAIAKMVEWLEAEGVGNEKVTYRLRDWLFSRQRYWGEPIPIIHWEDGTSTAVPESELPLVLPVTKDIRPSGTGESPLANLTDWLEVTREDGVKGRRETNTMPQWAGSSWYYLRYIDPHNTEKLADEELLKQWLPVDIYVGGAEHAVLHLLYARFWHKVLYDLGVVPTKEPFQKLFNQGMILGTSYRDSRGALVATDKVEKRDGSFFHVETGEELEQAPAKMSKSLKNVVNPDDVVEQYGADTLRVYEMFMGPLDASIAWSEEGLEGSRKFLDRVYRLITTKEITEENSGALDKVYNETVKAVTEQVDQMKFNTAIAQLMVFVNAANKEDKLFSDYAKGFVQLIAPFAPHLGEELWQVLTASGQSISYVPWPSYDESKLVENEIEIVVQIKGKVKAKLVVAKDLSREELQDLALANEKVQAEIAGKDIIKVIAVPNKLVNIVVK.

The 'HIGH' region motif lies at 41-52 (PYPSGAGLHVGH). Residues 610–614 (KMSKS) carry the 'KMSKS' region motif. Lys613 is a binding site for ATP.

This sequence belongs to the class-I aminoacyl-tRNA synthetase family.

The protein resides in the cytoplasm. The catalysed reaction is tRNA(Leu) + L-leucine + ATP = L-leucyl-tRNA(Leu) + AMP + diphosphate. The sequence is that of Leucine--tRNA ligase from Streptococcus agalactiae serotype III (strain NEM316).